A 236-amino-acid chain; its full sequence is DNA repair protein RecO (236 aa).

Belongs to the RecO family.

In terms of biological role, involved in DNA repair and RecF pathway recombination. This chain is DNA repair protein RecO, found in Stutzerimonas stutzeri (strain A1501) (Pseudomonas stutzeri).